Here is a 228-residue protein sequence, read N- to C-terminus: Ribosomal RNA small subunit methyltransferase G (228 aa).

S-adenosyl-L-methionine contacts are provided by residues glycine 70, 121–122 (AE), and arginine 138.

This sequence belongs to the methyltransferase superfamily. RNA methyltransferase RsmG family.

It is found in the cytoplasm. Functionally, specifically methylates the N7 position of a guanine in 16S rRNA. The chain is Ribosomal RNA small subunit methyltransferase G from Thermotoga sp. (strain RQ2).